Reading from the N-terminus, the 427-residue chain is D-inositol 3-phosphate glycosyltransferase (427 aa).

Residue His12 participates in 1D-myo-inositol 3-phosphate binding. Residues 18–19 (QP) and Gly26 contribute to the UDP-N-acetyl-alpha-D-glucosamine site. 1D-myo-inositol 3-phosphate is bound by residues 23–28 (DAGGMN), Lys81, Tyr113, Thr137, and Arg157. Positions 234, 239, and 297 each coordinate UDP-N-acetyl-alpha-D-glucosamine. Residues Tyr306, Gln307, and Ala309 each coordinate Mg(2+). Residues Glu319 and Glu327 each contribute to the UDP-N-acetyl-alpha-D-glucosamine site. Thr333 contacts Mg(2+).

The protein belongs to the glycosyltransferase group 1 family. MshA subfamily. As to quaternary structure, homodimer.

The catalysed reaction is 1D-myo-inositol 3-phosphate + UDP-N-acetyl-alpha-D-glucosamine = 1D-myo-inositol 2-acetamido-2-deoxy-alpha-D-glucopyranoside 3-phosphate + UDP + H(+). Functionally, catalyzes the transfer of a N-acetyl-glucosamine moiety to 1D-myo-inositol 3-phosphate to produce 1D-myo-inositol 2-acetamido-2-deoxy-glucopyranoside 3-phosphate in the mycothiol biosynthesis pathway. This chain is D-inositol 3-phosphate glycosyltransferase, found in Corynebacterium diphtheriae (strain ATCC 700971 / NCTC 13129 / Biotype gravis).